The sequence spans 136 residues: Probable glycine cleavage system H protein 3 (136 aa).

Residues methionine 28–lysine 109 form the Lipoyl-binding domain. Lysine 69 is subject to N6-lipoyllysine.

Belongs to the GcvH family. In terms of assembly, the glycine cleavage system is composed of four proteins: P, T, L and H. The cofactor is (R)-lipoate.

Its function is as follows. The glycine cleavage system catalyzes the degradation of glycine. The H protein shuttles the methylamine group of glycine from the P protein to the T protein. The protein is Probable glycine cleavage system H protein 3 of Sulfurisphaera tokodaii (strain DSM 16993 / JCM 10545 / NBRC 100140 / 7) (Sulfolobus tokodaii).